Reading from the N-terminus, the 176-residue chain is Pro-glucagon (176 aa).

An N-terminal signal peptide occupies residues 1–20 (MKSLYFVAGLLVMLAQGSWQ). Polar residues predominate over residues 25–35 (NTEEKSSSFPA). The segment at 25 to 59 (NTEEKSSSFPAPQTDPLGDPDQISEDKRHSQGTFT) is disordered. S54 bears the Phosphoserine mark. The propeptide occupies 84 to 89 (NKNNIA). S105 and S108 each carry phosphoserine. R127 carries the arginine amide modification. A propeptide spanning residues 131-145 (DFPEEVNIVEELRRR) is cleaved from the precursor. A phosphoserine mark is found at S150 and S152.

This sequence belongs to the glucagon family. Proglucagon is post-translationally processed in a tissue-specific manner in pancreatic A cells and intestinal L cells. In pancreatic A cells, the major bioactive hormone is glucagon cleaved by PCSK2/PC2. In the intestinal L cells PCSK1/PC1 liberates GLP-1, GLP-2, glicentin and oxyntomodulin. GLP-1 is further N-terminally truncated by post-translational processing in the intestinal L cells resulting in GLP-1(7-37) GLP-1-(7-36)amide. The C-terminal amidation is neither important for the metabolism of GLP-1 nor for its effects on the endocrine pancreas. In terms of tissue distribution, glucagon is secreted in the A cells of the islets of Langerhans. GLP-1, GLP-2, oxyntomodulin and glicentin are secreted from enteroendocrine cells throughout the gastrointestinal tract. GLP-1 and GLP-2 are also secreted in selected neurons in the brain.

It localises to the secreted. In terms of biological role, plays a key role in glucose metabolism and homeostasis. Regulates blood glucose by increasing gluconeogenesis and decreasing glycolysis. A counterregulatory hormone of insulin, raises plasma glucose levels in response to insulin-induced hypoglycemia. Plays an important role in initiating and maintaining hyperglycemic conditions in diabetes. Functionally, potent stimulator of glucose-dependent insulin release. Also stimulates insulin release in response to IL6. Plays important roles on gastric motility and the suppression of plasma glucagon levels. May be involved in the suppression of satiety and stimulation of glucose disposal in peripheral tissues, independent of the actions of insulin. Has growth-promoting activities on intestinal epithelium. May also regulate the hypothalamic pituitary axis (HPA) via effects on LH, TSH, CRH, oxytocin, and vasopressin secretion. Increases islet mass through stimulation of islet neogenesis and pancreatic beta cell proliferation. Inhibits beta cell apoptosis. Its function is as follows. Stimulates intestinal growth and up-regulates villus height in the small intestine, concomitant with increased crypt cell proliferation and decreased enterocyte apoptosis. The gastrointestinal tract, from the stomach to the colon is the principal target for GLP-2 action. Plays a key role in nutrient homeostasis, enhancing nutrient assimilation through enhanced gastrointestinal function, as well as increasing nutrient disposal. Stimulates intestinal glucose transport and decreases mucosal permeability. Significantly reduces food intake. Inhibits gastric emptying in humans. Suppression of gastric emptying may lead to increased gastric distension, which may contribute to satiety by causing a sensation of fullness. In terms of biological role, may modulate gastric acid secretion and the gastro-pyloro-duodenal activity. May play an important role in intestinal mucosal growth in the early period of life. The sequence is that of Pro-glucagon (GCG) from Ovis aries (Sheep).